The primary structure comprises 130 residues: Small ribosomal subunit protein uS11 (130 aa).

This sequence belongs to the universal ribosomal protein uS11 family. Part of the 30S ribosomal subunit. Interacts with proteins S7 and S18. Binds to IF-3.

In terms of biological role, located on the platform of the 30S subunit, it bridges several disparate RNA helices of the 16S rRNA. Forms part of the Shine-Dalgarno cleft in the 70S ribosome. This Xanthomonas campestris pv. campestris (strain B100) protein is Small ribosomal subunit protein uS11.